Consider the following 275-residue polypeptide: Voltage-dependent calcium channel gamma-5 subunit (275 aa).

Helical transmembrane passes span 8–28 (ALTLLSSVFAVCGLGLLGIAV), 103–123 (FPLVSLFFMFIGFILSNIGHI), 129–149 (ILAFVSGIFFILSGLSLVVGL), and 181–201 (FAAISFLLTESAGVMSVYLFM).

Belongs to the PMP-22/EMP/MP20 family. CACNG subfamily. As to quaternary structure, the L-type calcium channel is composed of five subunits: alpha-1, alpha-2/delta, beta and gamma. Acts as an auxiliary subunit for AMPA-selective glutamate receptors (AMPARs). Found in a complex with GRIA1, GRIA2, GRIA3, GRIA4, CNIH2, CNIH3, CACNG2, CACNG3, CACNG4, CACNG7 and CACNG8. Interacts with GRIA1, GRIA2, GRIA3 and GRIA4.

It localises to the membrane. The protein localises to the postsynaptic density membrane. Its function is as follows. Regulates the gating properties of AMPA-selective glutamate receptors (AMPARs). Modulates their gating properties by accelerating their rates of activation, deactivation and desensitization. Displays subunit-specific AMPA receptor regulation. Shows specificity for GRIA1, GRIA4 and the long isoform of GRIA2. According to PubMed:18817736, shows only specificity for GRIA2 and specifically to the form of GRIA2 for which a single amino acid in the pore region has been edited from a glutamine to an arginine residue. Thought to stabilize the calcium channel in an inactivated (closed) state. In Rattus norvegicus (Rat), this protein is Voltage-dependent calcium channel gamma-5 subunit (Cacng5).